The sequence spans 257 residues: NAD-capped RNA hydrolase NudC (257 aa).

Substrate is bound by residues Lys-25 and Arg-69. Zn(2+) is bound by residues Cys-98 and Cys-101. Glu-111 is a binding site for substrate. Zn(2+) contacts are provided by Cys-116 and Cys-119. Tyr-124 serves as a coordination point for substrate. The region spanning 125–248 (PQIAPCIIVA…TVARRLIEDT (124 aa)) is the Nudix hydrolase domain. Residues Ala-158, Glu-174, and Glu-178 each contribute to the a divalent metal cation site. The Nudix box signature appears at 159–180 (GFVEVGETLEQAVAREVMEESG). 192–199 (QPWPFPQS) contacts substrate. Glu-219 lines the a divalent metal cation pocket. Residue Ala-241 coordinates substrate.

This sequence belongs to the Nudix hydrolase family. NudC subfamily. Homodimer. Mg(2+) serves as cofactor. The cofactor is Mn(2+). Requires Zn(2+) as cofactor.

It carries out the reaction a 5'-end NAD(+)-phospho-ribonucleoside in mRNA + H2O = a 5'-end phospho-adenosine-phospho-ribonucleoside in mRNA + beta-nicotinamide D-ribonucleotide + 2 H(+). The catalysed reaction is NAD(+) + H2O = beta-nicotinamide D-ribonucleotide + AMP + 2 H(+). It catalyses the reaction NADH + H2O = reduced beta-nicotinamide D-ribonucleotide + AMP + 2 H(+). In terms of biological role, mRNA decapping enzyme that specifically removes the nicotinamide adenine dinucleotide (NAD) cap from a subset of mRNAs by hydrolyzing the diphosphate linkage to produce nicotinamide mononucleotide (NMN) and 5' monophosphate mRNA. The NAD-cap is present at the 5'-end of some mRNAs and stabilizes RNA against 5'-processing. Has preference for mRNAs with a 5'-end purine. Catalyzes the hydrolysis of a broad range of dinucleotide pyrophosphates. The sequence is that of NAD-capped RNA hydrolase NudC from Escherichia coli O127:H6 (strain E2348/69 / EPEC).